We begin with the raw amino-acid sequence, 391 residues long: Outer membrane protein 41 (391 aa).

Positions M1–A20 are cleaved as a signal peptide. Q21 carries the pyrrolidone carboxylic acid modification. The OmpA-like domain occupies T282–K391.

Belongs to the outer membrane OOP (TC 1.B.6) superfamily. In terms of assembly, disulfide-linked heterodimer with Omp40.

The protein resides in the cell outer membrane. Functionally, may have porin activity and function in peptidoglycan binding. This Porphyromonas gingivalis (strain ATCC BAA-308 / W83) protein is Outer membrane protein 41.